The chain runs to 117 residues: Large ribosomal subunit protein bL20c (117 aa).

It belongs to the bacterial ribosomal protein bL20 family.

Its subcellular location is the plastid. It is found in the chloroplast. Functionally, binds directly to 23S ribosomal RNA and is necessary for the in vitro assembly process of the 50S ribosomal subunit. It is not involved in the protein synthesizing functions of that subunit. The chain is Large ribosomal subunit protein bL20c from Platanus occidentalis (Sycamore).